Reading from the N-terminus, the 160-residue chain is Twist-related protein 2 (160 aa).

The disordered stretch occupies residues Met-1–Glu-63. Basic residues predominate over residues Lys-27–Lys-37. The 52-residue stretch at Ser-66–Leu-117 folds into the bHLH domain.

As to quaternary structure, efficient DNA binding requires dimerization with another bHLH protein. Forms a heterodimer with TCF3/E12. Also interacts with MEF2C. Expressed at low levels in sclerotome and dermatome of somites, and in limb buds at 10.5 dpc. Accumulates predominantly in dermatome, prevertebrae and derivatives of branchial arches by 13 dpc. Also expressed near surface of embryo and in chondrogenic cells. In adult, expressed at low levels in skin, bladder, uterus, aorta and heart.

The protein localises to the nucleus. It is found in the cytoplasm. In terms of biological role, binds to the E-box consensus sequence 5'-CANNTG-3' as a heterodimer and inhibits transcriptional activation by MYOD1, MYOG, MEF2A and MEF2C. Also represses expression of pro-inflammatory cytokines such as TNFA and IL1B. Involved in postnatal glycogen storage and energy metabolism. Inhibits the premature or ectopic differentiation of preosteoblast cells during osteogenesis, possibly by changing the internal signal transduction response of osteoblasts to external growth factors. This is Twist-related protein 2 (Twist2) from Mus musculus (Mouse).